Reading from the N-terminus, the 232-residue chain is Urease accessory protein UreF (232 aa).

It belongs to the UreF family. UreD, UreF and UreG form a complex that acts as a GTP-hydrolysis-dependent molecular chaperone, activating the urease apoprotein by helping to assemble the nickel containing metallocenter of UreC. The UreE protein probably delivers the nickel.

The protein resides in the cytoplasm. Required for maturation of urease via the functional incorporation of the urease nickel metallocenter. The polypeptide is Urease accessory protein UreF (Azorhizobium caulinodans (strain ATCC 43989 / DSM 5975 / JCM 20966 / LMG 6465 / NBRC 14845 / NCIMB 13405 / ORS 571)).